We begin with the raw amino-acid sequence, 403 residues long: Bifunctional enzyme IspD/IspF (403 aa).

Positions M1–I234 are 2-C-methyl-D-erythritol 4-phosphate cytidylyltransferase. Positions R235–T403 are 2-C-methyl-D-erythritol 2,4-cyclodiphosphate synthase. Residues D241 and H243 each contribute to the a divalent metal cation site. 4-CDP-2-C-methyl-D-erythritol 2-phosphate contacts are provided by residues D241–H243 and H267–S268. H275 serves as a coordination point for a divalent metal cation. 4-CDP-2-C-methyl-D-erythritol 2-phosphate-binding positions include D289–G291, T365–E368, F372, and R375.

It in the N-terminal section; belongs to the IspD/TarI cytidylyltransferase family. IspD subfamily. In the C-terminal section; belongs to the IspF family. A divalent metal cation is required as a cofactor.

The catalysed reaction is 2-C-methyl-D-erythritol 4-phosphate + CTP + H(+) = 4-CDP-2-C-methyl-D-erythritol + diphosphate. It catalyses the reaction 4-CDP-2-C-methyl-D-erythritol 2-phosphate = 2-C-methyl-D-erythritol 2,4-cyclic diphosphate + CMP. The protein operates within isoprenoid biosynthesis; isopentenyl diphosphate biosynthesis via DXP pathway; isopentenyl diphosphate from 1-deoxy-D-xylulose 5-phosphate: step 2/6. It functions in the pathway isoprenoid biosynthesis; isopentenyl diphosphate biosynthesis via DXP pathway; isopentenyl diphosphate from 1-deoxy-D-xylulose 5-phosphate: step 4/6. In terms of biological role, bifunctional enzyme that catalyzes the formation of 4-diphosphocytidyl-2-C-methyl-D-erythritol from CTP and 2-C-methyl-D-erythritol 4-phosphate (MEP) (IspD), and catalyzes the conversion of 4-diphosphocytidyl-2-C-methyl-D-erythritol 2-phosphate (CDP-ME2P) to 2-C-methyl-D-erythritol 2,4-cyclodiphosphate (ME-CPP) with a corresponding release of cytidine 5-monophosphate (CMP) (IspF). The protein is Bifunctional enzyme IspD/IspF of Nitrobacter hamburgensis (strain DSM 10229 / NCIMB 13809 / X14).